The chain runs to 684 residues: Soluble guanylate cyclase gcy-32 (684 aa).

Histidine 105 is a heme binding site. Residues 396 to 432 (DVEVNLQLEANNEQLETMTRELELERQKTDSILKDML) adopt a coiled-coil conformation. Residues 454–582 (TVMFCDLPAF…ETVTLASQME (129 aa)) enclose the Guanylate cyclase domain. Mg(2+)-binding residues include aspartate 459 and aspartate 503.

It belongs to the adenylyl cyclase class-4/guanylyl cyclase family. Heterodimer; with other soluble guanylate cyclases. Heme serves as cofactor. Expressed in a small number of neurons, corresponding to URX, AQR and PQR neurons.

Its subcellular location is the cytoplasm. The catalysed reaction is GTP = 3',5'-cyclic GMP + diphosphate. Its activity is regulated as follows. May be regulated by molecular oxygen. Probably not activated by nitric oxide (NO). Functionally, synthesizes cyclic GMP (cGMP) from GTP. Influences aerotaxis responses, aggregation and bordering behaviors (gathering around the edge of a bacterial lawn) in combination with other soluble guanylate cyclases. In Caenorhabditis elegans, this protein is Soluble guanylate cyclase gcy-32 (gcy-32).